The chain runs to 217 residues: Large ribosomal subunit protein uL29m (217 aa).

It belongs to the universal ribosomal protein uL29 family. As to quaternary structure, component of the mitochondrial large ribosomal subunit. Mature mitochondrial ribosomes consist of a small (37S) and a large (54S) subunit. The 37S subunit contains at least 33 different proteins and 1 molecule of RNA (15S). The 54S subunit contains at least 45 different proteins and 1 molecule of RNA (21S).

It is found in the mitochondrion. In Neosartorya fischeri (strain ATCC 1020 / DSM 3700 / CBS 544.65 / FGSC A1164 / JCM 1740 / NRRL 181 / WB 181) (Aspergillus fischerianus), this protein is Large ribosomal subunit protein uL29m (mrpl4).